Here is a 235-residue protein sequence, read N- to C-terminus: ATP synthase subunit a (235 aa).

A run of 5 helical transmembrane segments spans residues 17–37 (TTNIVSGLIIYAIVFFTLYGM), 76–96 (SFFAFVLFVFIFFANQFGLIF), 113–133 (PVVTLTLSLMVMVLAFAAGVA), 179–201 (LLMSLIANMAFSHGILTIIPGLF), and 211–230 (VFIGSIQAYVFVTLTTVYIS).

Belongs to the ATPase A chain family. As to quaternary structure, F-type ATPases have 2 components, CF(1) - the catalytic core - and CF(0) - the membrane proton channel. CF(1) has five subunits: alpha(3), beta(3), gamma(1), delta(1), epsilon(1). CF(0) has three main subunits: a(1), b(2) and c(9-12). The alpha and beta chains form an alternating ring which encloses part of the gamma chain. CF(1) is attached to CF(0) by a central stalk formed by the gamma and epsilon chains, while a peripheral stalk is formed by the delta and b chains.

Its subcellular location is the cell membrane. Functionally, key component of the proton channel; it plays a direct role in the translocation of protons across the membrane. The sequence is that of ATP synthase subunit a from Limosilactobacillus reuteri subsp. reuteri (strain JCM 1112) (Lactobacillus reuteri).